The chain runs to 159 residues: Ribosomal RNA large subunit methyltransferase H (159 aa).

S-adenosyl-L-methionine is bound by residues Leu76, Gly108, and 127 to 132 (FSHMTF).

This sequence belongs to the RNA methyltransferase RlmH family. As to quaternary structure, homodimer.

Its subcellular location is the cytoplasm. It catalyses the reaction pseudouridine(1915) in 23S rRNA + S-adenosyl-L-methionine = N(3)-methylpseudouridine(1915) in 23S rRNA + S-adenosyl-L-homocysteine + H(+). Specifically methylates the pseudouridine at position 1915 (m3Psi1915) in 23S rRNA. The sequence is that of Ribosomal RNA large subunit methyltransferase H from Halothermothrix orenii (strain H 168 / OCM 544 / DSM 9562).